The chain runs to 901 residues: Alpha-actinin-3 (901 aa).

Met1 is subject to N-acetylmethionine. Residues 1–261 are actin-binding; the sequence is MMMVMQPEGL…IMTYVSCFYH (261 aa). Calponin-homology (CH) domains are found at residues 45 to 149 and 158 to 264; these read KQQR…LRFA and TSAK…HAFA. 4 Spectrin repeats span residues 288 to 398, 408 to 513, 523 to 634, and 644 to 747; these read KLME…WLLS, HLAE…ALER, RLQL…TLQE, and RLRR…EVEN. EF-hand domains lie at 760-795 and 796-831; these read EQLN…MGYD and LGEV…ETAE. Positions 773, 777, 779, 784, 809, and 811 each coordinate Ca(2+).

Belongs to the alpha-actinin family. In terms of assembly, homodimer; antiparallel. Also forms heterodimers with ACTN2. Interacts with MYOZ1. Expression restricted to fast (type 2) skeletal muscle fibers (at protein level).

Its function is as follows. F-actin cross-linking protein which is thought to anchor actin to a variety of intracellular structures. This is a bundling protein. In Homo sapiens (Human), this protein is Alpha-actinin-3 (ACTN3).